The sequence spans 380 residues: Alcohol dehydrogenase-like 4 (380 aa).

Zn(2+)-binding residues include Cys47, Thr49, His70, Cys100, Cys103, Cys106, Cys114, and Cys180. An alcohol is bound by residues Thr49 and His70. Residue Thr49 coordinates NAD(+). NAD(+) contacts are provided by residues 205 to 210 (GLGAVG), Asp229, Lys234, 298 to 300 (LGV), Phe325, and Arg375.

Belongs to the zinc-containing alcohol dehydrogenase family. Class-III subfamily. As to quaternary structure, homodimer. The cofactor is Zn(2+).

The protein localises to the cytoplasm. It catalyses the reaction a primary alcohol + NAD(+) = an aldehyde + NADH + H(+). The enzyme catalyses a secondary alcohol + NAD(+) = a ketone + NADH + H(+). The polypeptide is Alcohol dehydrogenase-like 4 (Arabidopsis thaliana (Mouse-ear cress)).